The primary structure comprises 97 residues: Co-chaperonin GroES (97 aa).

The protein belongs to the GroES chaperonin family. Heptamer of 7 subunits arranged in a ring. Interacts with the chaperonin GroEL.

It localises to the cytoplasm. Its function is as follows. Together with the chaperonin GroEL, plays an essential role in assisting protein folding. The GroEL-GroES system forms a nano-cage that allows encapsulation of the non-native substrate proteins and provides a physical environment optimized to promote and accelerate protein folding. GroES binds to the apical surface of the GroEL ring, thereby capping the opening of the GroEL channel. The chain is Co-chaperonin GroES from Pseudomonas putida (Arthrobacter siderocapsulatus).